Consider the following 420-residue polypeptide: Gamma-glutamyl phosphate reductase (420 aa).

Belongs to the gamma-glutamyl phosphate reductase family.

The protein resides in the cytoplasm. The catalysed reaction is L-glutamate 5-semialdehyde + phosphate + NADP(+) = L-glutamyl 5-phosphate + NADPH + H(+). The protein operates within amino-acid biosynthesis; L-proline biosynthesis; L-glutamate 5-semialdehyde from L-glutamate: step 2/2. Catalyzes the NADPH-dependent reduction of L-glutamate 5-phosphate into L-glutamate 5-semialdehyde and phosphate. The product spontaneously undergoes cyclization to form 1-pyrroline-5-carboxylate. The protein is Gamma-glutamyl phosphate reductase of Streptococcus pneumoniae (strain P1031).